We begin with the raw amino-acid sequence, 76 residues long: Mu-scoloptoxin(15)-Ssm1a (76 aa).

Positions 1–23 (MEKKIIFLVFLVALLALPGFIST) are cleaved as a signal peptide. Positions 33–36 (KKRK) are important for inhibition of KCNQ4. 2 disulfides stabilise this stretch: C43-C69 and C47-C71.

Belongs to the scoloptoxin-15 family. As to expression, expressed by the venom gland.

The protein localises to the secreted. In terms of biological role, blocks voltage-gated potassium channels Kv7.4/KCNQ4 (IC(50)=2.5 uM), Kv7.1/KCNQ1 (IC(50)=2.8 uM), Kv7.2/KCNQ2 (IC(50)=2.7 uM) and Kv7.5/KCNQ5 (IC(50)=2.7 uM). Targets the pore domain, in particular negatively charged residues 'Asp-266' and 'Asp-288', of KCNQ4 and probably other KCNQ channel family members where these residues are conserved. In vivo, shows vasoconstrictive activity resulting in acute hypertension when injected intravenously in mice. Also induces coronary vasospasms ultimately leading to heart failure. Induces seizures when injected into the hippocampus of mice. Decreases respiratory rate while increasing respiratory amplitude, probably by triggering a contraction of the bronchial ring. The sequence is that of Mu-scoloptoxin(15)-Ssm1a from Scolopendra mutilans (Chinese red-headed centipede).